The primary structure comprises 542 residues: Glucose-6-phosphate isomerase 2 (542 aa).

Residue E353 is the Proton donor of the active site. Active-site residues include H384 and K505.

It belongs to the GPI family.

It is found in the cytoplasm. It catalyses the reaction alpha-D-glucose 6-phosphate = beta-D-fructose 6-phosphate. Its pathway is carbohydrate biosynthesis; gluconeogenesis. It participates in carbohydrate degradation; glycolysis; D-glyceraldehyde 3-phosphate and glycerone phosphate from D-glucose: step 2/4. Functionally, catalyzes the reversible isomerization of glucose-6-phosphate to fructose-6-phosphate. The protein is Glucose-6-phosphate isomerase 2 of Cupriavidus pinatubonensis (strain JMP 134 / LMG 1197) (Cupriavidus necator (strain JMP 134)).